The sequence spans 342 residues: Methylthioribose-1-phosphate isomerase (342 aa).

Substrate is bound by residues 49–51 (RGA), Arg-86, and Gln-187. The active-site Proton donor is the Asp-228. Residue 238 to 239 (NK) participates in substrate binding.

This sequence belongs to the eIF-2B alpha/beta/delta subunits family. MtnA subfamily.

It catalyses the reaction 5-(methylsulfanyl)-alpha-D-ribose 1-phosphate = 5-(methylsulfanyl)-D-ribulose 1-phosphate. The protein operates within amino-acid biosynthesis; L-methionine biosynthesis via salvage pathway; L-methionine from S-methyl-5-thio-alpha-D-ribose 1-phosphate: step 1/6. Its function is as follows. Catalyzes the interconversion of methylthioribose-1-phosphate (MTR-1-P) into methylthioribulose-1-phosphate (MTRu-1-P). In Enterobacter sp. (strain 638), this protein is Methylthioribose-1-phosphate isomerase.